The primary structure comprises 322 residues: Lignin-forming anionic peroxidase (322 aa).

The N-terminal stretch at 1-27 is a signal peptide; it reads MNTPTQSFRAKAAIFSLLLLSCMQCHA. Gln28 is modified (pyrrolidone carboxylic acid). Cystine bridges form between Cys38/Cys118, Cys71/Cys76, Cys124/Cys318, and Cys203/Cys229. Catalysis depends on His69, which acts as the Proton acceptor. Asp70, Val73, Gly75, Asp77, and Ser79 together coordinate Ca(2+). Position 166 (Pro166) interacts with substrate. His196 is a heme b binding site. Thr197 serves as a coordination point for Ca(2+). N-linked (GlcNAc...) asparagine glycosylation is present at Asn213. 3 residues coordinate Ca(2+): Asp242, Thr245, and Asp250.

This sequence belongs to the peroxidase family. Classical plant (class III) peroxidase subfamily. It depends on Ca(2+) as a cofactor. Heme b is required as a cofactor. As to expression, mesophyll protoplasts and to a much lesser extent, roots and germinating seeds.

It is found in the secreted. It carries out the reaction 2 a phenolic donor + H2O2 = 2 a phenolic radical donor + 2 H2O. Removal of H(2)O(2), oxidation of toxic reductants, biosynthesis and degradation of lignin, suberization, auxin catabolism, response to environmental stresses such as wounding, pathogen attack and oxidative stress. These functions might be dependent on each isozyme/isoform in each plant tissue. Functionally, plays an integral role in secondary cell wall biosynthesis by the polymerization of cinnamyl alcohols into lignin and by forming rigid cross-links between cellulose, pectin, hydroxy-proline-rich glycoproteins, and lignin. In Nicotiana sylvestris (Wood tobacco), this protein is Lignin-forming anionic peroxidase.